A 464-amino-acid chain; its full sequence is Fumarate hydratase class II (464 aa).

Residues 100–102 (SGT), 131–134 (HPND), 141–143 (SSN), and Thr189 each bind substrate. His190 serves as the catalytic Proton donor/acceptor. Residue Ser320 is part of the active site. Substrate-binding positions include Ser321 and 326 to 328 (KVN).

This sequence belongs to the class-II fumarase/aspartase family. Fumarase subfamily. Homotetramer.

It localises to the cytoplasm. It catalyses the reaction (S)-malate = fumarate + H2O. It functions in the pathway carbohydrate metabolism; tricarboxylic acid cycle; (S)-malate from fumarate: step 1/1. In terms of biological role, involved in the TCA cycle. Catalyzes the stereospecific interconversion of fumarate to L-malate. The polypeptide is Fumarate hydratase class II (Deinococcus radiodurans (strain ATCC 13939 / DSM 20539 / JCM 16871 / CCUG 27074 / LMG 4051 / NBRC 15346 / NCIMB 9279 / VKM B-1422 / R1)).